Reading from the N-terminus, the 468-residue chain is Anthocyanidin 3-O-glucoside 2'''-O-xylosyltransferase (468 aa).

Residues Ser-284, 344–346, 361–369, and 383–386 each bind UDP-alpha-D-xylose; these read IQQ, HCGFGSMWE, and HGEQ.

This sequence belongs to the UDP-glycosyltransferase family.

The enzyme catalyses an anthocyanidin 3-O-beta-D-glucoside + UDP-alpha-D-xylose = an anthocyanidin 3-O-beta-D-sambubioside + UDP + 2 H(+). It participates in secondary metabolite biosynthesis; flavonoid biosynthesis. Contributes to the last few anthocyanin biosynthetic steps. Converts cyanidin 3-O-glucoside to cyanidin 3-O-xylosyl(1-&gt;2)glucoside. Can use 3-O-glucosylated anthocyanidins/flavonols and uridine diphosphate (UDP)-xylose as substrates. This chain is Anthocyanidin 3-O-glucoside 2'''-O-xylosyltransferase (A3G2XYLT), found in Arabidopsis thaliana (Mouse-ear cress).